A 655-amino-acid chain; its full sequence is tRNA-guanine(15) transglycosylase (655 aa).

Aspartate 89 functions as the Nucleophile in the catalytic mechanism. Substrate-binding residues include aspartate 124 and alanine 195. Residues cysteine 281, cysteine 283, and cysteine 286 each contribute to the Zn(2+) site. One can recognise a PUA domain in the interval 577–652 (KYRVVVNKEA…LAVKVRGGLK (76 aa)).

Belongs to the archaeosine tRNA-ribosyltransferase family. It depends on Zn(2+) as a cofactor.

The enzyme catalyses guanosine(15) in tRNA + 7-cyano-7-deazaguanine = 7-cyano-7-carbaguanosine(15) in tRNA + guanine. The protein operates within tRNA modification; archaeosine-tRNA biosynthesis. Exchanges the guanine residue with 7-cyano-7-deazaguanine (preQ0) at position 15 in the dihydrouridine loop (D-loop) of archaeal tRNAs. Can also utilize guanine as substrate. In Methanocaldococcus jannaschii (strain ATCC 43067 / DSM 2661 / JAL-1 / JCM 10045 / NBRC 100440) (Methanococcus jannaschii), this protein is tRNA-guanine(15) transglycosylase.